Here is a 409-residue protein sequence, read N- to C-terminus: 3-dehydro-bile acid delta(4,6)-reductase (409 aa).

The FAD site is built by Ser-12, Glu-33, Val-131, Glu-378, Asn-390, and Leu-391.

This sequence belongs to the BaiN/RdsA family. BaiN subfamily. FAD is required as a cofactor.

It carries out the reaction 3-oxocholan-24-oyl-CoA + NAD(+) = 3-oxochol-4-en-24-oyl-CoA + NADH + H(+). It catalyses the reaction 3-oxochol-4-en-24-oyl-CoA + NAD(+) = 3-oxochol-4,6-dien-24-oyl-CoA + NADH + H(+). The catalysed reaction is 12alpha-hydroxy-3-oxocholan-24-oyl-CoA + NAD(+) = 12alpha-hydroxy-3-oxochol-4-en-24-oyl-CoA + NADH + H(+). The enzyme catalyses 12alpha-hydroxy-3-oxochol-4-en-24-oyl-CoA + NAD(+) = 12alpha-hydroxy-3-oxochola-4,6-dien-24-oyl-CoA + NADH + H(+). The protein operates within lipid metabolism; bile acid degradation. In terms of biological role, involved in the secondary bile acid metabolism. Catalyzes two subsequent reductions of the double bonds within the bile acid A/B rings of 3-oxochol-4,6-dien-24-oyl-CoA and 12alpha-hydroxy-3-oxochol-4,6-dien-24-oyl-CoA to yield 3-oxocholan-24-oyl-CoA and 12alpha-hydroxy-3-oxocholan-24-oyl-CoA, respectively. The chain is 3-dehydro-bile acid delta(4,6)-reductase from Clostridium scindens (strain ATCC 35704 / DSM 5676 / VPI 13733 / 19).